The chain runs to 807 residues: Glycerol-3-phosphate acyltransferase (807 aa).

The HXXXXD motif signature appears at 308–313 (CHRSHM).

Belongs to the GPAT/DAPAT family.

It localises to the cell inner membrane. It catalyses the reaction sn-glycerol 3-phosphate + an acyl-CoA = a 1-acyl-sn-glycero-3-phosphate + CoA. It participates in phospholipid metabolism; CDP-diacylglycerol biosynthesis; CDP-diacylglycerol from sn-glycerol 3-phosphate: step 1/3. This Shewanella loihica (strain ATCC BAA-1088 / PV-4) protein is Glycerol-3-phosphate acyltransferase.